An 88-amino-acid polypeptide reads, in one-letter code: Alpha-latrotoxin-associated low molecular weight protein (88 aa).

The signal sequence occupies residues 1-18 (MSKLFFVVFLCLIISVFA).

The protein belongs to the arthropod CHH/MIH/GIH/VIH hormone family. As to expression, expressed by the venom gland.

Its subcellular location is the secreted. Functionally, may increase the toxicity of alpha-latrotoxin and/or other venom components. Is non-toxic to mice and to the cockroach Periplaneta americana. The sequence is that of Alpha-latrotoxin-associated low molecular weight protein from Latrodectus tredecimguttatus (Mediterranean black widow spider).